The chain runs to 269 residues: Major capsid protein P2 (269 aa).

Homotrimer.

It is found in the virion. Major capsid protein. The polypeptide is Major capsid protein P2 (II) (Pseudoalteromonas phage PM2 (Bacteriophage PM2)).